A 158-amino-acid polypeptide reads, in one-letter code: MPPKSSTKAEPKASSAKTQVAKAKSAKKAVVKGTSSKTQRRIRTSVTFRRPKTLRLSRKPKYPRTSVPHAPRMDAYRTLVRPLNTESAMKKIEDNNTLLFIVDLKANKRQIADAVKKLYDVTPLRVNTLIRPDGKKKAFVRLTPEVDALDIANKIGFI.

Residues 1–43 (MPPKSSTKAEPKASSAKTQVAKAKSAKKAVVKGTSSKTQRRIR) are disordered. The segment covering 12–23 (KASSAKTQVAKA) has biased composition (low complexity).

It belongs to the universal ribosomal protein uL23 family.

Functionally, this protein binds to a specific region on the 26S rRNA. In Puccinia graminis (Black stem rust fungus), this protein is Large ribosomal subunit protein uL23.